The sequence spans 393 residues: Phospho-N-acetylmuramoyl-pentapeptide-transferase (393 aa).

Transmembrane regions (helical) follow at residues 29–49 (RAVM…PWVI), 75–95 (TPTM…LLWF), 101–121 (FVWV…VDDW), 138–158 (YLWQ…SVSE), 194–214 (VSYP…IVGA), 226–246 (GLAI…AYVT), 263–283 (AGEL…FLWF), 290–310 (VFMG…IAVI), 315–335 (IVLG…MAQV), and 370–390 (QVVV…LSTL).

Belongs to the glycosyltransferase 4 family. MraY subfamily. The cofactor is Mg(2+).

It localises to the cell inner membrane. The enzyme catalyses UDP-N-acetyl-alpha-D-muramoyl-L-alanyl-gamma-D-glutamyl-meso-2,6-diaminopimeloyl-D-alanyl-D-alanine + di-trans,octa-cis-undecaprenyl phosphate = di-trans,octa-cis-undecaprenyl diphospho-N-acetyl-alpha-D-muramoyl-L-alanyl-D-glutamyl-meso-2,6-diaminopimeloyl-D-alanyl-D-alanine + UMP. It participates in cell wall biogenesis; peptidoglycan biosynthesis. In terms of biological role, catalyzes the initial step of the lipid cycle reactions in the biosynthesis of the cell wall peptidoglycan: transfers peptidoglycan precursor phospho-MurNAc-pentapeptide from UDP-MurNAc-pentapeptide onto the lipid carrier undecaprenyl phosphate, yielding undecaprenyl-pyrophosphoryl-MurNAc-pentapeptide, known as lipid I. This Leptothrix cholodnii (strain ATCC 51168 / LMG 8142 / SP-6) (Leptothrix discophora (strain SP-6)) protein is Phospho-N-acetylmuramoyl-pentapeptide-transferase.